The primary structure comprises 652 residues: Chaperone protein HtpG (652 aa).

The segment at 1–348 (MATDAHKETL…SDDLPLNVSR (348 aa)) is a; substrate-binding. The interval 349–565 (ELLQHNPLLD…EYDFGMGMQR (217 aa)) is b. A c region spans residues 566 to 652 (LLKAAGHAMP…EAKSNAARGD (87 aa)).

It belongs to the heat shock protein 90 family. Homodimer.

The protein resides in the cytoplasm. In terms of biological role, molecular chaperone. Has ATPase activity. This is Chaperone protein HtpG from Alkalilimnicola ehrlichii (strain ATCC BAA-1101 / DSM 17681 / MLHE-1).